Consider the following 1243-residue polypeptide: Plasma membrane calcium-transporting ATPase 2 (1243 aa).

The span at methionine 1–asparagine 13 shows a compositional bias: polar residues. The disordered stretch occupies residues methionine 1–phenylalanine 24. Residues methionine 1–threonine 94 lie on the Cytoplasmic side of the membrane. Serine 18 carries the phosphoserine modification. Residues phenylalanine 95–alanine 115 form a helical membrane-spanning segment. Over isoleucine 116–isoleucine 152 the chain is Extracellular. Residues glutamate 153–tryptophan 173 form a helical membrane-spanning segment. The Cytoplasmic portion of the chain corresponds to serine 174–leucine 390. The interval glycine 334–lysine 381 is disordered. Residues threonine 391–isoleucine 410 traverse the membrane as a helical segment. The Extracellular portion of the chain corresponds to isoleucine 411–phenylalanine 443. Residues phenylalanine 444 to leucine 461 form a helical membrane-spanning segment. Residues alanine 462 to isoleucine 875 are Cytoplasmic-facing. Aspartate 499 functions as the 4-aspartylphosphate intermediate in the catalytic mechanism. Aspartate 820 and aspartate 824 together coordinate Mg(2+). Residues serine 876–threonine 895 traverse the membrane as a helical segment. The Extracellular segment spans residues glycine 896 to leucine 905. Residues lysine 906–alanine 926 traverse the membrane as a helical segment. Over threonine 927–leucine 946 the chain is Cytoplasmic. A helical membrane pass occupies residues isoleucine 947–leucine 969. Topologically, residues leucine 970–leucine 987 are extracellular. Residues histidine 988–asparagine 1009 form a helical membrane-spanning segment. The Cytoplasmic segment spans residues glutamate 1010–arginine 1028. Residues asparagine 1029–glycine 1050 form a helical membrane-spanning segment. At glycine 1051–glutamine 1060 the chain is on the extracellular side. The helical transmembrane segment at leucine 1061–alanine 1082 threads the bilayer. Topologically, residues threonine 1083–leucine 1243 are cytoplasmic. A phosphoserine mark is found at glutamate 1120, arginine 1132, and leucine 1134. Positions leucine 1123–glutamine 1140 are calmodulin-binding subdomain A. Threonine 1139 is modified (phosphothreonine; by PKC). Residues isoleucine 1141 to serine 1150 are calmodulin-binding subdomain B. Alanine 1146, leucine 1151, serine 1163, histidine 1165, aspartate 1177, and serine 1178 each carry phosphoserine. Threonine 1188 is modified (phosphothreonine). The tract at residues alanine 1194–leucine 1243 is disordered. 2 stretches are compositionally biased toward low complexity: residues leucine 1196–serine 1211 and threonine 1220–serine 1234. Serine 1201 carries the phosphoserine; by PKA modification. A Phosphoserine modification is found at serine 1211.

It belongs to the cation transport ATPase (P-type) (TC 3.A.3) family. Type IIB subfamily. As to quaternary structure, interacts with PDZD11. As to expression, mainly expressed in brain cortex. Found in low levels in skeletal muscle, heart muscle, stomach, liver, kidney and lung. Isoforms containing segment B are found in brain cortex and at low levels in other tissues. Isoforms containing segments X and W are found at low levels in all tissues. Isoforms containing segment A and segment Z are found at low levels in skeletal muscle and heart muscle.

It is found in the cell membrane. It localises to the synapse. The protein localises to the apical cell membrane. The protein resides in the basolateral cell membrane. It catalyses the reaction Ca(2+)(in) + ATP + H2O = Ca(2+)(out) + ADP + phosphate + H(+). Its activity is regulated as follows. Up-regulated by calmodulin which increases the affinity of the pump for Ca(2+) ions. Its function is as follows. ATP-driven Ca(2+) ion pump involved in the maintenance of basal intracellular Ca(2+) levels in specialized cells of cerebellar circuit and vestibular and cochlear systems. Uses ATP as an energy source to transport cytosolic Ca(2+) ions across the plasma membrane to the extracellular compartment. Has fast activation and Ca(2+) clearance rate suited to control fast neuronal Ca(2+) dynamics. At parallel fiber to Purkinje neuron synapse, mediates presynaptic Ca(2+) efflux in response to climbing fiber-induced Ca(2+) rise. Provides for fast return of Ca(2+) concentrations back to their resting levels, ultimately contributing to long-term depression induction and motor learning. Plays an essential role in hearing and balance. In cochlear hair cells, shuttles Ca(2+) ions from stereocilia to the endolymph and dissipates Ca(2+) transients generated by the opening of the mechanoelectrical transduction channels. Regulates Ca(2+) levels in the vestibular system, where it contributes to the formation of otoconia. In non-excitable cells, regulates Ca(2+) signaling through spatial control of Ca(2+) ions extrusion and dissipation of Ca(2+) transients generated by store-operated channels. In lactating mammary gland, allows for the high content of Ca(2+) ions in the milk. The chain is Plasma membrane calcium-transporting ATPase 2 from Homo sapiens (Human).